Reading from the N-terminus, the 669-residue chain is JmjC domain-containing histone demethylation protein 1 (669 aa).

The interval 1 to 61 (MTAVAASSRV…RRKKPRTELV (61 aa)) is disordered. 2 stretches are compositionally biased toward polar residues: residues 16 to 27 (ASSSAHPRTLRS) and 36 to 49 (HDSSISPSAAQSKQ). The segment at 65–126 (ELDCAACPAV…KWYCQPCITR (62 aa)) adopts a PHD-type zinc-finger fold. Disordered regions lie at residues 131–150 (FESGTSSSHPPFANVVRPPR) and 220–256 (PPDRSSQAPHVQAKAEDVAASPVPRPKPARAKKQATH). Residues 246-255 (KPARAKKQAT) are compositionally biased toward basic residues. The region spanning 332–494 (VTGTPMQAYV…TQWKLVEIEE (163 aa)) is the JmjC domain. Residues H390 and D392 each contribute to the Fe cation site. Residue K407 coordinates substrate. H462 is a binding site for Fe cation.

The protein belongs to the JHDM1 histone demethylase family. It depends on Fe(2+) as a cofactor.

The protein localises to the nucleus. It carries out the reaction N(6),N(6)-dimethyl-L-lysyl(36)-[histone H3] + 2 2-oxoglutarate + 2 O2 = L-lysyl(36)-[histone H3] + 2 formaldehyde + 2 succinate + 2 CO2. Histone demethylase that specifically demethylates 'Lys-36' of histone H3, thereby playing a central role in histone code. The polypeptide is JmjC domain-containing histone demethylation protein 1 (JHD1) (Mycosarcoma maydis (Corn smut fungus)).